The primary structure comprises 591 residues: Probable anion transporter 4, chloroplastic (591 aa).

The segment at 1 to 38 is disordered; sequence MAMGAVLSSRTFASPLSSSGKQHPPQNNKCTCSSPPTR. A chloroplast-targeting transit peptide spans 1-76; that stretch reads MAMGAVLSSR…LSARFHQPVV (76 aa). Residues 8–36 are compositionally biased toward polar residues; the sequence is SSRTFASPLSSSGKQHPPQNNKCTCSSPP. 11 helical membrane passes run 184 to 204, 220 to 240, 249 to 269, 271 to 291, 313 to 333, 336 to 356, 402 to 422, 440 to 460, 475 to 495, 531 to 551, and 565 to 585; these read VVLLCFFSFLLCNMDRVNMSI, VGLIQSSFFWGYLLTQILGGI, VVLGFGVVWWSIATVLTPLAA, IGLPFLLVMRAFMGIGEGVAM, LVYSGMYLGSVTGLAFSPLLI, FGWPSVFYAFGSLGSVWFALW, VWALIVSHFCHNWGTFILLTW, LLCVLPWLTMAIFANIGGWIA, KIMQSIGFLGPALFLTLLSKV, AGVLLGLSNTAGVLAGVFGTA, and VFQVAVVLYIVGTVVWNVFST.

It belongs to the major facilitator superfamily. Sodium/anion cotransporter (TC 2.A.1.14) family.

The protein resides in the plastid. The protein localises to the chloroplast membrane. In terms of biological role, probable anion transporter. This Oryza sativa subsp. japonica (Rice) protein is Probable anion transporter 4, chloroplastic (PHT4;4).